Consider the following 396-residue polypeptide: FAD-dependent monooxygenase phomE' (396 aa).

Position 3 (glutamate 3) interacts with FAD. Residues arginine 158 and tyrosine 196 contribute to the active site. Aspartate 277 and glycine 290 together coordinate FAD.

The protein belongs to the paxM FAD-dependent monooxygenase family. As to quaternary structure, monomer. The cofactor is FAD.

In terms of biological role, FAD-dependent monooxygenase; part of the gene cluster that mediates the biosynthesis of the phomopsins, a group of hexapeptide mycotoxins which infects lupins and causes lupinosis disease in livestock. The role of phomE' within the phomopsins biosynthesis pathway has still to be determined. The pathway starts with the processing of the precursor phomA by several endopeptidases including kexin proteases as well as the cluster-specific S41 family peptidase phomP1 and the oligopeptidase phomG to produce 10 identical copies of the hexapeptide Tyr-Val-Ile-Pro-Ile-Asp. After being excised from the precursor peptide, the core peptides are cyclized and modified post-translationally by enzymes encoded within the gene cluster. The timing and order of proteolysis of the phomA precursor and PTMs are still unknown. Two tyrosinase-like enzymes, phomQ1 and phomQ2, catalyze the chlorination and hydroxylation of Tyr, respectively. PhomYb, is proposed to be involved in the construction of the macrocyclic structure. The other 4 ustYa family proteins may be involved in PTMs that generate the unique structure of phomopsin A. PhomYa is required for the hydroxylation of C-beta of Tyr. PhomYc, phomYd, and phomYe are responsible for the biosynthesis of 2,3-dehydroisoleucine (dIle), 2,3-dehydroaspartic acid (dAsp), and 3,4-dehydroproline (dPro), respectively. While dIle formation by phomYc is indispensable for the installation of dAsp by phomYd, the order of the other PTMs have not been elucidated yet. Most of the biosynthetic enzymes likely have broad substrate specificity, and thus, there might be a metabolic grid from a precursor to phomopsin A. The enzyme(s) responsible for the biosynthesis of 3,4-dehydrovaline (dVal) have also not been identified yet. Finally, phomM acts as an S-adenosylmethionine-dependent alpha-N-methyltransferase that catalyzes two successive N-methylation reactions, converting N-desmethyl-phomopsin A to phomopsin A and phomopsin A further to an N,N-dimethylated congener called phomopsin E. This chain is FAD-dependent monooxygenase phomE', found in Diaporthe leptostromiformis (Lupinosis disease fungus).